A 364-amino-acid chain; its full sequence is Formimidoylglutamase (364 aa).

Mn(2+) is bound by residues His-133, Asp-189, His-191, Asp-193, Asp-286, and Asp-288.

The protein belongs to the arginase family. Mn(2+) is required as a cofactor.

It catalyses the reaction N-formimidoyl-L-glutamate + H2O = formamide + L-glutamate. It participates in amino-acid degradation; L-histidine degradation into L-glutamate; L-glutamate from N-formimidoyl-L-glutamate (hydrolase route): step 1/1. Functionally, catalyzes the conversion of N-formimidoyl-L-glutamate to L-glutamate and formamide. The chain is Formimidoylglutamase from Photobacterium profundum (strain SS9).